Reading from the N-terminus, the 257-residue chain is NAD-capped RNA hydrolase NudC (257 aa).

Position 69 (Arg69) interacts with substrate. Residues Cys98 and Cys101 each coordinate Zn(2+). Glu111 contributes to the substrate binding site. Cys116 and Cys119 together coordinate Zn(2+). Residue Tyr124 coordinates substrate. Positions 125–248 (PQIAPCIIVA…TVARRLIEDT (124 aa)) constitute a Nudix hydrolase domain. Ala158, Glu174, and Glu178 together coordinate a divalent metal cation. The Nudix box signature appears at 159-180 (GFVEVGETLEQAVAREVMEESG). 192-199 (QPWPFPQS) lines the substrate pocket. Glu219 provides a ligand contact to a divalent metal cation. Ala241 serves as a coordination point for substrate.

This sequence belongs to the Nudix hydrolase family. NudC subfamily. Homodimer. The cofactor is Mg(2+). Mn(2+) is required as a cofactor. Zn(2+) serves as cofactor.

It carries out the reaction a 5'-end NAD(+)-phospho-ribonucleoside in mRNA + H2O = a 5'-end phospho-adenosine-phospho-ribonucleoside in mRNA + beta-nicotinamide D-ribonucleotide + 2 H(+). The enzyme catalyses NAD(+) + H2O = beta-nicotinamide D-ribonucleotide + AMP + 2 H(+). The catalysed reaction is NADH + H2O = reduced beta-nicotinamide D-ribonucleotide + AMP + 2 H(+). Its function is as follows. mRNA decapping enzyme that specifically removes the nicotinamide adenine dinucleotide (NAD) cap from a subset of mRNAs by hydrolyzing the diphosphate linkage to produce nicotinamide mononucleotide (NMN) and 5' monophosphate mRNA. The NAD-cap is present at the 5'-end of some mRNAs and stabilizes RNA against 5'-processing. Has preference for mRNAs with a 5'-end purine. Catalyzes the hydrolysis of a broad range of dinucleotide pyrophosphates. This chain is NAD-capped RNA hydrolase NudC, found in Salmonella typhimurium (strain LT2 / SGSC1412 / ATCC 700720).